We begin with the raw amino-acid sequence, 352 residues long: MSRGTMPQPEAWPGASCAETPAREAAATARDGGKAAASGQPRPEMQCPAEHEEDMYRAADEIEKEKELLIHERGASEPRLSVAPEMDIMDYCKKEWRGNTQKATCMKMGYEEVSQKFTSIRRVRGDNYCALRATLFQAMSQAVGLPPWLQDPELMLLPEKLISKYNWIKQWKLGLKFDGKNEDLVDKIKESLTLLRKKWAGLAEMRTAEARQIACDELFTNEAEEYSLYEAVKFLMLNRAIELYNDKEKGKEVPFFSVLLFARDTSNDPGQLLRNHLNQVGHTGGLEQVEMFLLAYAVRHTIQVYRLSKYNTEEFITVYPTDPPKDWPVVTLIAEDDRHYNIPVRVCEETSL.

The tract at residues 1–48 (MSRGTMPQPEAWPGASCAETPAREAAATARDGGKAAASGQPRPEMQCP) is disordered. Over residues 18–37 (AETPAREAAATARDGGKAAA) the composition is skewed to low complexity. The PIM motif motif lies at 52–57 (EEDMYR). Residue tyrosine 56 is modified to Phosphotyrosine. Linear diubiquitin binding regions lie at residues 95-96 (EW) and 124-126 (RGD). The OTU domain maps to 118–346 (TSIRRVRGDN…DRHYNIPVRV (229 aa)). Residue aspartate 126 is part of the active site. The active-site Nucleophile is cysteine 129. Linear diubiquitin binding stretches follow at residues 255-259 (FFSVL), 283-289 (TGGLEQV), and 336-338 (DDR). Residue histidine 339 is part of the active site.

It belongs to the peptidase C65 family. Otulin subfamily. In terms of assembly, interacts (via the PUB domain) with RNF31 (via the PIM motif); the interaction is direct. Interacts with DVL2. Post-translationally, ubiquitinated. In terms of processing, acetylated. Phosphorylated. Phosphorylation at Tyr-56 prevents interaction with RNF31; dephosphorylation promotes interaction with RNF31 and the LUBAC complex.

It is found in the cytoplasm. The enzyme catalyses Thiol-dependent hydrolysis of ester, thioester, amide, peptide and isopeptide bonds formed by the C-terminal Gly of ubiquitin (a 76-residue protein attached to proteins as an intracellular targeting signal).. Deubiquitinase that specifically removes linear ('Met-1'-linked) polyubiquitin chains to substrates and acts as a regulator of angiogenesis and innate immune response. Required during angiogenesis, craniofacial and neuronal development by regulating the canonical Wnt signaling together with the LUBAC complex. Acts as a negative regulator of NF-kappa-B by regulating the activity of the LUBAC complex. OTULIN function is mainly restricted to homeostasis of the LUBAC complex: acts by removing 'Met-1'-linked autoubiquitination of the LUBAC complex, thereby preventing inactivation of the LUBAC complex. Acts as a key negative regulator of inflammation by restricting spontaneous inflammation and maintaining immune homeostasis. In myeloid cell, required to prevent unwarranted secretion of cytokines leading to inflammation and autoimmunity by restricting linear polyubiquitin formation. Plays a role in innate immune response by restricting linear polyubiquitin formation on LUBAC complex in response to NOD2 stimulation, probably to limit NOD2-dependent pro-inflammatory signaling. This is Ubiquitin thioesterase otulin from Homo sapiens (Human).